A 268-amino-acid chain; its full sequence is Tryptophan synthase alpha chain (268 aa).

Residues Glu-49 and Asp-60 each act as proton acceptor in the active site.

Belongs to the TrpA family. Tetramer of two alpha and two beta chains.

It catalyses the reaction (1S,2R)-1-C-(indol-3-yl)glycerol 3-phosphate + L-serine = D-glyceraldehyde 3-phosphate + L-tryptophan + H2O. Its pathway is amino-acid biosynthesis; L-tryptophan biosynthesis; L-tryptophan from chorismate: step 5/5. The alpha subunit is responsible for the aldol cleavage of indoleglycerol phosphate to indole and glyceraldehyde 3-phosphate. The sequence is that of Tryptophan synthase alpha chain from Aeromonas salmonicida (strain A449).